Consider the following 712-residue polypeptide: Semaphorin-1A (712 aa).

A signal peptide spans 1 to 20; sequence MVVKILVWSICLIALCHAWM. Residues 21–483 enclose the Sema domain; the sequence is PDSSSKLINH…GKDEIRLANL (463 aa). Over 21–601 the chain is Extracellular; the sequence is PDSSSKLINH…IGGCAVRQQL (581 aa). 2 N-linked (GlcNAc...) asparagine glycosylation sites follow: Asn42 and Asn69. Cystine bridges form between Cys95–Cys105 and Cys123–Cys132. N-linked (GlcNAc...) asparagine glycans are attached at residues Asn161 and Asn265. 4 disulfides stabilise this stretch: Cys242-Cys357, Cys266-Cys316, Cys486-Cys503, and Cys495-Cys512. The chain crosses the membrane as a helical span at residues 602-622; the sequence is VIYTAGTLHIVVVVVSIVGLF. Residues 623-712 lie on the Cytoplasmic side of the membrane; the sequence is SWLYSGLSVF…TLQKIKKTYI (90 aa).

Belongs to the semaphorin family.

It is found in the membrane. Plays a role in growth cones guidance. The chain is Semaphorin-1A (SEMA-1A) from Tribolium confusum (Confused flour beetle).